We begin with the raw amino-acid sequence, 251 residues long: 2,3-bisphosphoglycerate-dependent phosphoglycerate mutase (251 aa).

Residues 7–14 (RHGESEWN), 20–21 (TG), Arg59, 86–89 (ERHY), Lys97, 113–114 (RR), and 186–187 (GN) contribute to the substrate site. His8 acts as the Tele-phosphohistidine intermediate in catalysis. The active-site Proton donor/acceptor is Glu86.

Belongs to the phosphoglycerate mutase family. BPG-dependent PGAM subfamily.

It carries out the reaction (2R)-2-phosphoglycerate = (2R)-3-phosphoglycerate. The protein operates within carbohydrate degradation; glycolysis; pyruvate from D-glyceraldehyde 3-phosphate: step 3/5. Functionally, catalyzes the interconversion of 2-phosphoglycerate and 3-phosphoglycerate. The sequence is that of 2,3-bisphosphoglycerate-dependent phosphoglycerate mutase from Treponema pallidum (strain Nichols).